Consider the following 59-residue polypeptide: Large ribosomal subunit protein uL30 (59 aa).

The protein belongs to the universal ribosomal protein uL30 family. As to quaternary structure, part of the 50S ribosomal subunit.

This is Large ribosomal subunit protein uL30 from Geotalea daltonii (strain DSM 22248 / JCM 15807 / FRC-32) (Geobacter daltonii).